The following is a 127-amino-acid chain: Competence protein ComGF (127 aa).

As to quaternary structure, the transformation pili are flexible filaments, consisting mainly of the major pilin ComGC and smaller amounts of the minor pilins, including at least ComGD, ComGF and ComGG. Interacts with ComGD. Interacts with ComGG.

It localises to the cell membrane. Its subcellular location is the fimbrium. Required for formation of the type IV-like pilus (T4P) that plays a role in transformation. Involved in transformation. Transformation pili are dynamically extended and retracted, perhaps thereby promoting DNA uptake and transformation. Required for transformation and DNA binding. The chain is Competence protein ComGF (comGF) from Bacillus subtilis (strain 168).